A 216-amino-acid polypeptide reads, in one-letter code: Putative F-box protein At2g03610 (216 aa).

The 51-residue stretch at Asn-19 to Asn-69 folds into the F-box domain.

The sequence is that of Putative F-box protein At2g03610 from Arabidopsis thaliana (Mouse-ear cress).